A 115-amino-acid chain; its full sequence is U17-barytoxin-Tl1c (115 aa).

The signal sequence occupies residues 1–20; the sequence is MKTIIVFLSLLVLATKFGDA. The propeptide occupies 21 to 74; the sequence is KEGVNQKQKKEVTQNEFREEYLNEMAAMSLVQQLEAIERALFENEAGRNSRQKR. Intrachain disulfides connect C75-C89, C82-C94, and C88-C109.

Belongs to the neurotoxin 14 (magi-1) family. 03 (ICK-30-40) subfamily. In terms of tissue distribution, expressed by the venom gland.

The protein resides in the secreted. Ion channel inhibitor. The protein is U17-barytoxin-Tl1c of Trittame loki (Brush-footed trapdoor spider).